Consider the following 246-residue polypeptide: 1-(5-phosphoribosyl)-5-[(5-phosphoribosylamino)methylideneamino] imidazole-4-carboxamide isomerase (246 aa).

The active-site Proton acceptor is aspartate 8. Aspartate 131 functions as the Proton donor in the catalytic mechanism.

The protein belongs to the HisA/HisF family.

The protein localises to the cytoplasm. It catalyses the reaction 1-(5-phospho-beta-D-ribosyl)-5-[(5-phospho-beta-D-ribosylamino)methylideneamino]imidazole-4-carboxamide = 5-[(5-phospho-1-deoxy-D-ribulos-1-ylimino)methylamino]-1-(5-phospho-beta-D-ribosyl)imidazole-4-carboxamide. The protein operates within amino-acid biosynthesis; L-histidine biosynthesis; L-histidine from 5-phospho-alpha-D-ribose 1-diphosphate: step 4/9. The protein is 1-(5-phosphoribosyl)-5-[(5-phosphoribosylamino)methylideneamino] imidazole-4-carboxamide isomerase of Bordetella petrii (strain ATCC BAA-461 / DSM 12804 / CCUG 43448).